The chain runs to 193 residues: Ion-translocating oxidoreductase complex subunit A (193 aa).

A run of 6 helical transmembrane segments spans residues 5–25 (ALLF…FLGL), 39–59 (IGMG…SWLI), 62–82 (FILV…LVLA), 102–122 (LLGI…VVLL), 134–154 (TIYG…FAAI), and 171–191 (SIAL…TGLV).

Belongs to the NqrDE/RnfAE family. The complex is composed of six subunits: RnfA, RnfB, RnfC, RnfD, RnfE and RnfG.

It localises to the cell inner membrane. Part of a membrane-bound complex that couples electron transfer with translocation of ions across the membrane. The protein is Ion-translocating oxidoreductase complex subunit A of Pectobacterium atrosepticum (strain SCRI 1043 / ATCC BAA-672) (Erwinia carotovora subsp. atroseptica).